The chain runs to 122 residues: Large ribosomal subunit protein uL14 (122 aa).

The protein belongs to the universal ribosomal protein uL14 family. Part of the 50S ribosomal subunit. Forms a cluster with proteins L3 and L19. In the 70S ribosome, L14 and L19 interact and together make contacts with the 16S rRNA in bridges B5 and B8.

Functionally, binds to 23S rRNA. Forms part of two intersubunit bridges in the 70S ribosome. This is Large ribosomal subunit protein uL14 from Bradyrhizobium sp. (strain BTAi1 / ATCC BAA-1182).